Here is a 122-residue protein sequence, read N- to C-terminus: Bet1-like SNARE 1-1 (122 aa).

At 1 to 103 (MNPRREPRGG…VFETKSSRRM (103 aa)) the chain is on the cytoplasmic side. A t-SNARE coiled-coil homology domain is found at 32–94 (EINEHENERA…SGTMDRFKTV (63 aa)). Ser-56 carries the post-translational modification Phosphoserine. The chain crosses the membrane as a helical; Anchor for type IV membrane protein span at residues 104-121 (LTLVASFVGLFLVIYYLT). Arg-122 is a topological domain (vesicular).

Belongs to the BET1 family.

The protein localises to the golgi apparatus membrane. The protein resides in the endoplasmic reticulum membrane. Required for vesicular transport from the ER to the Golgi complex. Functions as a SNARE associated with ER-derived vesicles. This is Bet1-like SNARE 1-1 (BET11) from Arabidopsis thaliana (Mouse-ear cress).